We begin with the raw amino-acid sequence, 276 residues long: Undecaprenyl-diphosphatase (276 aa).

The next 5 helical transmembrane spans lie at 84–104, 115–135, 188–208, 222–242, and 250–270; these read YRLG…GLLF, LWVV…AEYL, FGFL…LPDA, QLLV…SWFL, and MYWF…LLAT.

Belongs to the UppP family.

It localises to the cell membrane. It catalyses the reaction di-trans,octa-cis-undecaprenyl diphosphate + H2O = di-trans,octa-cis-undecaprenyl phosphate + phosphate + H(+). Catalyzes the dephosphorylation of undecaprenyl diphosphate (UPP). Confers resistance to bacitracin. In Mycobacterium ulcerans (strain Agy99), this protein is Undecaprenyl-diphosphatase.